Reading from the N-terminus, the 306-residue chain is Non-specific ribonucleoside hydrolase RihC (306 aa).

Residue H235 is part of the active site.

The protein belongs to the IUNH family. RihC subfamily.

Functionally, hydrolyzes both purine and pyrimidine ribonucleosides with a broad-substrate specificity. The protein is Non-specific ribonucleoside hydrolase RihC of Salmonella agona (strain SL483).